The primary structure comprises 296 residues: MLNRFSYSSNAWHNLRVDGPDADGIAVIVLARSQSRNALTLPMLTDMVQLLSAMDADDSVKCIVFTGEGPFFCSGVDLTEGFGEIGKTRDTHRDAGGKLALAIHNCRKPTIAAINGTAVGVGITMTLPMSIRIAAKTAKISFPFVRRGIVADAASSFYLPRLIGYGRALHLFTTGALYPAESGLLHGLFSETVNAASSTLPRALEVARDIAVNASQVGVYLTRDLVYRSPRSPEQAHLLESAALYTRYQSRDFEEGVQSFLEKRKPRFQDTMREQSGEGVLDRGDCVVGLAFKPKL.

The short motif at 294-296 is the Peroxisomal targeting signal type 1 element; the sequence is PKL.

This sequence belongs to the enoyl-CoA hydratase/isomerase family.

It is found in the peroxisome. It catalyses the reaction a (3S)-3-hydroxyacyl-CoA = a (2E)-enoyl-CoA + H2O. The enzyme catalyses a 4-saturated-(3S)-3-hydroxyacyl-CoA = a (3E)-enoyl-CoA + H2O. It functions in the pathway mycotoxin biosynthesis. Enoyl-CoA hydratase; part of the gene clusters that mediate the biosynthesis of the host-selective toxins (HSTs) AF-toxins responsible for Alternaria black spot of strawberry disease by the strawberry pathotype. AF-toxin I and III are valine derivatives of 2,3-dyhydroxy-isovaleric acid and 2-hydroxy-isovaleric acid respectively, while AF II is an isoleucine derivative of 2-hydroxy-valeric acid. These derivatives are bound to a 9,10-epoxy-8-hydroxy-9-methyl-decatrienoic acid (EDA) moiety. On cellular level, AF-toxins affect plasma membrane of susceptible cells and cause a sudden increase in loss of K(+) after a few minutes of toxin treatment. The aldo-keto reductase AFTS1 catalyzes the conversion of 2-keto-isovaleric acid (2-KIV) to 2-hydroxy-isovaleric acid (2-HIV) by reduction of its ketone to an alcohol. The acyl-CoA ligase AFT1, the hydrolase AFT2 and the enoyl-CoA hydratases AFT3 and AFT6, but also the polyketide synthase AFT9, the acyl-CoA dehydrogenase AFT10, the cytochrome P450 monooxygenase AFT11 and the oxidoreductase AFT12 are all involved in the biosynthesis of the AK-, AF- and ACT-toxin common EDA structural moiety. The exact function of each enzyme, and of additional enzymes identified within the AF-toxin clusters have still to be determined. This chain is Enoyl-CoA hydratase AFT3-1 (AFT3-1), found in Alternaria alternata (Alternaria rot fungus).